A 217-amino-acid polypeptide reads, in one-letter code: Uracil-DNA glycosylase (217 aa).

The Proton acceptor role is filled by D62.

Belongs to the uracil-DNA glycosylase (UDG) superfamily. UNG family.

It localises to the cytoplasm. The enzyme catalyses Hydrolyzes single-stranded DNA or mismatched double-stranded DNA and polynucleotides, releasing free uracil.. In terms of biological role, excises uracil residues from the DNA which can arise as a result of misincorporation of dUMP residues by DNA polymerase or due to deamination of cytosine. The polypeptide is Uracil-DNA glycosylase (Streptococcus pyogenes serotype M18 (strain MGAS8232)).